We begin with the raw amino-acid sequence, 294 residues long: MHNTTKRVTVPALEAMLYETIKVLDHGFIRVIDYMGDDSSIVQAARVSYGKGTKQLNQDKGLINYLLRHYHTTPFEMCDIKFHIKLPIFIARQWIRHRTASVNEYSARYSILGNEFYLPDPANIASQSVVNKQCRAGDSVPKKVSEKVLAILEEDARRCYRHYKELMNADEDGNILDENVSGIARELARINLTLNYYTEWYWKINLHNLLHFLRLRTDPKAQYEIRVYAEKILDIVKAWVPFTYEAFEEYRLQGANISRKGLEVIKRMIKGEKVIHETSGMNKREWEELVKIFR.

In terms of domain architecture, ThyX spans 27-250 (GFIRVIDYMG…PFTYEAFEEY (224 aa)). FAD is bound by residues Thr-73, 96-98 (RHR), and Glu-104. Residues 93 to 96 (QWIR), 104 to 108 (EYSAR), and Arg-189 each bind dUMP. Residues 96 to 106 (RHRTASVNEYS) carry the ThyX motif motif. FAD contacts are provided by residues 205-207 (NLH) and His-211. Arg-216 lines the dUMP pocket. Residue Arg-216 is the Involved in ionization of N3 of dUMP, leading to its activation of the active site.

Belongs to the thymidylate synthase ThyX family. In terms of assembly, homotetramer. FAD serves as cofactor.

The catalysed reaction is dUMP + (6R)-5,10-methylene-5,6,7,8-tetrahydrofolate + NADPH + H(+) = dTMP + (6S)-5,6,7,8-tetrahydrofolate + NADP(+). Its pathway is pyrimidine metabolism; dTTP biosynthesis. Catalyzes the reductive methylation of 2'-deoxyuridine-5'-monophosphate (dUMP) to 2'-deoxythymidine-5'-monophosphate (dTMP) while utilizing 5,10-methylenetetrahydrofolate (mTHF) as the methyl donor, and NADPH and FADH(2) as the reductant. The protein is Flavin-dependent thymidylate synthase of Rickettsia prowazekii (strain Madrid E).